The following is a 525-amino-acid chain: Tigger transposable element-derived protein 2 (525 aa).

Residues 1-52 (MLGKRKRVVLTIKDKLDIIKKLEEGNSFKKLSVLYGIGESTVRDIKKNKERI) enclose the HTH psq-type domain. DNA-binding regions (H-T-H motif) lie at residues 28–48 (FKKL…IKKN) and 100–132 (TICA…FKQR). Residues 67 to 139 (KRKSMKSSTY…KQRHGIPKAA (73 aa)) form the HTH CENPB-type domain. Residues 168–385 (LLPEQIYGAD…IRSNTITRAW (218 aa)) enclose the DDE-1 domain.

Belongs to the tigger transposable element derived protein family.

It localises to the nucleus. The chain is Tigger transposable element-derived protein 2 (Tigd2) from Mus musculus (Mouse).